The following is a 342-amino-acid chain: MALLDPHYPLGRHNTFRFEAAARYAAHVRAAQDIAEALTDPRARGLPVLVLGGGSNIVLTRDFDGLVLLMEIPGVQVGRATLDGRAVHTVTAGAGESWHGLVARTVADGLPGLENLALIPGTVGAAPIQNIGAYGVEIKDRFHSLRAYDRHAGEFVTLDAADCAFGYRDSLFKRAGADRYVIAEVTFALPVDWQPDTHYAELARELAARDIAAPAAQDIFDAVVAIRRRKLPDPAEIGNAGSFFKNPIVDTATRDALLARFPGLVGYAQPDGSYKLAAGWMIDQCGFKGRQSGAVGVYDKQALVLVHRGGGSAVQLMTLAREIQDTVHARFGVRIEPEPVVI.

Residues 17-192 enclose the FAD-binding PCMH-type domain; the sequence is RFEAAARYAA…AEVTFALPVD (176 aa). Residue Arg-168 is part of the active site. The Proton donor role is filled by Ser-242. Glu-338 is a catalytic residue.

Belongs to the MurB family. FAD is required as a cofactor.

The protein localises to the cytoplasm. The catalysed reaction is UDP-N-acetyl-alpha-D-muramate + NADP(+) = UDP-N-acetyl-3-O-(1-carboxyvinyl)-alpha-D-glucosamine + NADPH + H(+). The protein operates within cell wall biogenesis; peptidoglycan biosynthesis. Its function is as follows. Cell wall formation. This chain is UDP-N-acetylenolpyruvoylglucosamine reductase, found in Ralstonia nicotianae (strain ATCC BAA-1114 / GMI1000) (Ralstonia solanacearum).